Consider the following 577-residue polypeptide: Urease subunit alpha (577 aa).

The Urease domain maps to 136-577; that stretch reads GTVDCHVHLI…LPMTQRYFLF (442 aa). Ni(2+)-binding residues include His-141, His-143, and Lys-224. At Lys-224 the chain carries N6-carboxylysine. Residue His-226 coordinates substrate. Ni(2+)-binding residues include His-253 and His-279. His-327 serves as the catalytic Proton donor. Asp-367 contributes to the Ni(2+) binding site.

It belongs to the metallo-dependent hydrolases superfamily. Urease alpha subunit family. Heterotrimer of UreA (gamma), UreB (beta) and UreC (alpha) subunits. Three heterotrimers associate to form the active enzyme. Ni cation is required as a cofactor. Carboxylation allows a single lysine to coordinate two nickel ions.

The protein localises to the cytoplasm. It catalyses the reaction urea + 2 H2O + H(+) = hydrogencarbonate + 2 NH4(+). It participates in nitrogen metabolism; urea degradation; CO(2) and NH(3) from urea (urease route): step 1/1. This is Urease subunit alpha from Mycobacterium bovis (strain ATCC BAA-935 / AF2122/97).